The chain runs to 286 residues: Undecaprenyl-diphosphatase (286 aa).

The next 7 helical transmembrane spans lie at 50–70 (PGVSVTAVIQLGSIVAVIAYF), 97–117 (LGIAMTIGTLPILFAGLAIKL), 127–147 (LRSVPAIAGVSILMALLLALA), 165–185 (GLLVGLAQVLALIPGVSRSGS), 200–220 (AARFSFLLGIPAITIAGLVEL), 230–250 (GGVLPLMVGIVSAAVVSWLAI), and 262–282 (TWVFVIYRLLFGILLLAWWAG).

The protein belongs to the UppP family.

It is found in the cell inner membrane. It catalyses the reaction di-trans,octa-cis-undecaprenyl diphosphate + H2O = di-trans,octa-cis-undecaprenyl phosphate + phosphate + H(+). In terms of biological role, catalyzes the dephosphorylation of undecaprenyl diphosphate (UPP). Confers resistance to bacitracin. In Synechococcus sp. (strain WH7803), this protein is Undecaprenyl-diphosphatase.